The chain runs to 263 residues: Hemin import ATP-binding protein HmuV (263 aa).

The ABC transporter domain occupies 2-242 (IEARDVSVDI…DLIEKVFDCR (241 aa)). ATP is bound at residue 34–41 (GPNGSGKT).

Belongs to the ABC transporter superfamily. Heme (hemin) importer (TC 3.A.1.14.5) family. The complex is composed of two ATP-binding proteins (HmuV), two transmembrane proteins (HmuU) and a solute-binding protein (HmuT).

It is found in the cell inner membrane. Part of the ABC transporter complex HmuTUV involved in hemin import. Responsible for energy coupling to the transport system. In Mesorhizobium japonicum (strain LMG 29417 / CECT 9101 / MAFF 303099) (Mesorhizobium loti (strain MAFF 303099)), this protein is Hemin import ATP-binding protein HmuV.